Here is a 95-residue protein sequence, read N- to C-terminus: Large ribosomal subunit protein uL23 (95 aa).

It belongs to the universal ribosomal protein uL23 family. In terms of assembly, part of the 50S ribosomal subunit. Contacts protein L29, and trigger factor when it is bound to the ribosome.

Its function is as follows. One of the early assembly proteins it binds 23S rRNA. One of the proteins that surrounds the polypeptide exit tunnel on the outside of the ribosome. Forms the main docking site for trigger factor binding to the ribosome. The protein is Large ribosomal subunit protein uL23 of Coxiella burnetii (strain RSA 493 / Nine Mile phase I).